The primary structure comprises 197 residues: Carnitine operon protein CaiE (197 aa).

Belongs to the transferase hexapeptide repeat family.

The protein operates within amine and polyamine metabolism; carnitine metabolism. Functionally, overproduction of CaiE stimulates the activity of CaiB and CaiD. In Citrobacter koseri (strain ATCC BAA-895 / CDC 4225-83 / SGSC4696), this protein is Carnitine operon protein CaiE.